The primary structure comprises 253 residues: uncharacterized protein (253 aa).

Residues Ile-17, Ser-36, Asp-62, Asn-89, Lys-123, Tyr-158, Lys-162, Val-191, and Thr-193 each contribute to the NADP(+) site. Tyr-158 acts as the Proton acceptor in catalysis. Lys-162 serves as the catalytic Lowers pKa of active site Tyr.

Belongs to the short-chain dehydrogenases/reductases (SDR) family.

The protein resides in the cytoplasm. It is found in the nucleus. This is an uncharacterized protein from Schizosaccharomyces pombe (strain 972 / ATCC 24843) (Fission yeast).